A 262-amino-acid chain; its full sequence is Type III pantothenate kinase (262 aa).

Residue 12-19 participates in ATP binding; sequence DIGNTSIA. Substrate is bound by residues Tyr-94 and 109-112; that span reads GSDV. Asp-111 serves as the catalytic Proton acceptor. Asp-132 lines the K(+) pocket. Thr-135 contacts ATP. Substrate is bound at residue Thr-187.

Belongs to the type III pantothenate kinase family. As to quaternary structure, homodimer. NH4(+) is required as a cofactor. K(+) serves as cofactor.

Its subcellular location is the cytoplasm. It carries out the reaction (R)-pantothenate + ATP = (R)-4'-phosphopantothenate + ADP + H(+). It functions in the pathway cofactor biosynthesis; coenzyme A biosynthesis; CoA from (R)-pantothenate: step 1/5. Its function is as follows. Catalyzes the phosphorylation of pantothenate (Pan), the first step in CoA biosynthesis. The protein is Type III pantothenate kinase of Borrelia garinii subsp. bavariensis (strain ATCC BAA-2496 / DSM 23469 / PBi) (Borreliella bavariensis).